Here is a 198-residue protein sequence, read N- to C-terminus: HTH-type transcriptional regulator BetI (198 aa).

An HTH tetR-type domain is found at 8–68; it reads PLRRRELIDA…ATMRHLLREL (61 aa). A DNA-binding region (H-T-H motif) is located at residues 31-50; sequence TVAQIAHEAGVSPALAHHYF.

It functions in the pathway amine and polyamine biosynthesis; betaine biosynthesis via choline pathway [regulation]. Functionally, repressor involved in the biosynthesis of the osmoprotectant glycine betaine. It represses transcription of the choline transporter BetT and the genes of BetAB involved in the synthesis of glycine betaine. The protein is HTH-type transcriptional regulator BetI of Brucella canis (strain ATCC 23365 / NCTC 10854 / RM-666).